The primary structure comprises 289 residues: Acetylglutamate kinase (289 aa).

Residues 60-61 (GG), R82, and N186 contribute to the substrate site.

The protein belongs to the acetylglutamate kinase family. ArgB subfamily.

It is found in the cytoplasm. The enzyme catalyses N-acetyl-L-glutamate + ATP = N-acetyl-L-glutamyl 5-phosphate + ADP. The protein operates within amino-acid biosynthesis; L-arginine biosynthesis; N(2)-acetyl-L-ornithine from L-glutamate: step 2/4. Catalyzes the ATP-dependent phosphorylation of N-acetyl-L-glutamate. The chain is Acetylglutamate kinase from Methanoculleus marisnigri (strain ATCC 35101 / DSM 1498 / JR1).